Here is a 259-residue protein sequence, read N- to C-terminus: 4-hydroxy-tetrahydrodipicolinate reductase (259 aa).

Residues glycine 9 to methionine 14 and glutamate 35 each bind NAD(+). Arginine 36 is an NADP(+) binding site. NAD(+) is bound by residues glycine 92–threonine 94 and alanine 116–methionine 119. The active-site Proton donor/acceptor is the histidine 149. Residue histidine 150 participates in (S)-2,3,4,5-tetrahydrodipicolinate binding. The active-site Proton donor is lysine 153. Glycine 159–threonine 160 contacts (S)-2,3,4,5-tetrahydrodipicolinate.

It belongs to the DapB family.

It is found in the cytoplasm. It carries out the reaction (S)-2,3,4,5-tetrahydrodipicolinate + NAD(+) + H2O = (2S,4S)-4-hydroxy-2,3,4,5-tetrahydrodipicolinate + NADH + H(+). The enzyme catalyses (S)-2,3,4,5-tetrahydrodipicolinate + NADP(+) + H2O = (2S,4S)-4-hydroxy-2,3,4,5-tetrahydrodipicolinate + NADPH + H(+). Its pathway is amino-acid biosynthesis; L-lysine biosynthesis via DAP pathway; (S)-tetrahydrodipicolinate from L-aspartate: step 4/4. Catalyzes the conversion of 4-hydroxy-tetrahydrodipicolinate (HTPA) to tetrahydrodipicolinate. The polypeptide is 4-hydroxy-tetrahydrodipicolinate reductase (Oleidesulfovibrio alaskensis (strain ATCC BAA-1058 / DSM 17464 / G20) (Desulfovibrio alaskensis)).